We begin with the raw amino-acid sequence, 387 residues long: UDP-N-acetylglucosamine--N-acetylmuramyl-(pentapeptide) pyrophosphoryl-undecaprenol N-acetylglucosamine transferase (387 aa).

Residues 26–28 (TGG), asparagine 137, arginine 177, serine 205, and glutamine 306 contribute to the UDP-N-acetyl-alpha-D-glucosamine site.

Belongs to the glycosyltransferase 28 family. MurG subfamily.

It localises to the cell inner membrane. The catalysed reaction is di-trans,octa-cis-undecaprenyl diphospho-N-acetyl-alpha-D-muramoyl-L-alanyl-D-glutamyl-meso-2,6-diaminopimeloyl-D-alanyl-D-alanine + UDP-N-acetyl-alpha-D-glucosamine = di-trans,octa-cis-undecaprenyl diphospho-[N-acetyl-alpha-D-glucosaminyl-(1-&gt;4)]-N-acetyl-alpha-D-muramoyl-L-alanyl-D-glutamyl-meso-2,6-diaminopimeloyl-D-alanyl-D-alanine + UDP + H(+). It functions in the pathway cell wall biogenesis; peptidoglycan biosynthesis. Cell wall formation. Catalyzes the transfer of a GlcNAc subunit on undecaprenyl-pyrophosphoryl-MurNAc-pentapeptide (lipid intermediate I) to form undecaprenyl-pyrophosphoryl-MurNAc-(pentapeptide)GlcNAc (lipid intermediate II). The protein is UDP-N-acetylglucosamine--N-acetylmuramyl-(pentapeptide) pyrophosphoryl-undecaprenol N-acetylglucosamine transferase of Rhodospirillum rubrum (strain ATCC 11170 / ATH 1.1.1 / DSM 467 / LMG 4362 / NCIMB 8255 / S1).